A 366-amino-acid chain; its full sequence is tRNA-queuosine alpha-mannosyltransferase (366 aa).

Belongs to the glycosyltransferase group 1 family. Glycosyltransferase 4 subfamily.

Its subcellular location is the cytoplasm. It is found in the nucleus. It catalyses the reaction queuosine(34) in tRNA(Asp) + GDP-alpha-D-mannose = O-4''-alpha-D-mannosylqueuosine(34) in tRNA(Asp) + GDP + H(+). Glycosyltransferase that specifically catalyzes mannosylation of cytoplasmic tRNA(Asp) modified with queuosine at position 34 (queuosine(34)). Mannosylates the cyclopentene moiety of queuosine(34) in tRNA(Asp) to form mannosyl-queuosine(34). Mannosylation of queuosine(34) in tRNA(Asp) is required to slow-down elongation at cognate codons, GAC and GAU, thereby regulating protein translation. This is tRNA-queuosine alpha-mannosyltransferase (GTDC1) from Bos taurus (Bovine).